The chain runs to 97 residues: Aspartyl/glutamyl-tRNA(Asn/Gln) amidotransferase subunit C (97 aa).

Belongs to the GatC family. Heterotrimer of A, B and C subunits.

The enzyme catalyses L-glutamyl-tRNA(Gln) + L-glutamine + ATP + H2O = L-glutaminyl-tRNA(Gln) + L-glutamate + ADP + phosphate + H(+). It catalyses the reaction L-aspartyl-tRNA(Asn) + L-glutamine + ATP + H2O = L-asparaginyl-tRNA(Asn) + L-glutamate + ADP + phosphate + 2 H(+). Functionally, allows the formation of correctly charged Asn-tRNA(Asn) or Gln-tRNA(Gln) through the transamidation of misacylated Asp-tRNA(Asn) or Glu-tRNA(Gln) in organisms which lack either or both of asparaginyl-tRNA or glutaminyl-tRNA synthetases. The reaction takes place in the presence of glutamine and ATP through an activated phospho-Asp-tRNA(Asn) or phospho-Glu-tRNA(Gln). This Prochlorococcus marinus (strain SARG / CCMP1375 / SS120) protein is Aspartyl/glutamyl-tRNA(Asn/Gln) amidotransferase subunit C.